The sequence spans 361 residues: DNA replication and repair protein RecF (361 aa).

An ATP-binding site is contributed by 30–37; the sequence is GANGSGKT.

It belongs to the RecF family.

The protein localises to the cytoplasm. In terms of biological role, the RecF protein is involved in DNA metabolism; it is required for DNA replication and normal SOS inducibility. RecF binds preferentially to single-stranded, linear DNA. It also seems to bind ATP. This Glaesserella parasuis serovar 5 (strain SH0165) (Haemophilus parasuis) protein is DNA replication and repair protein RecF.